A 205-amino-acid polypeptide reads, in one-letter code: Small ribosomal subunit protein uS4 (205 aa).

Positions 1 to 16 (MSKRESSKYKIDRRMG) are enriched in basic and acidic residues. The interval 1–46 (MSKRESSKYKIDRRMGENIWGRPKSPVNRREYGPGQHGQRRKSKLS) is disordered. Residues 94–157 (SRLDAIVYRA…KQLVTVLEAV (64 aa)) enclose the S4 RNA-binding domain.

The protein belongs to the universal ribosomal protein uS4 family. As to quaternary structure, part of the 30S ribosomal subunit. Contacts protein S5. The interaction surface between S4 and S5 is involved in control of translational fidelity.

In terms of biological role, one of the primary rRNA binding proteins, it binds directly to 16S rRNA where it nucleates assembly of the body of the 30S subunit. Functionally, with S5 and S12 plays an important role in translational accuracy. The protein is Small ribosomal subunit protein uS4 of Sinorhizobium medicae (strain WSM419) (Ensifer medicae).